The primary structure comprises 215 residues: uncharacterized protein (215 aa).

A signal peptide spans 1–17 (MKKVLASATILSLMLVG). Residues 17–110 (GCSNGGNDES…NKQQQSVQDN (94 aa)) are disordered. Cysteine 18 is lipidated: N-palmitoyl cysteine. Cysteine 18 is lipidated: S-diacylglycerol cysteine. Positions 25 to 62 (ESSHKDDSSKTEQKDKSSSQHDSKKDSKRNDTNNKQDN) are enriched in basic and acidic residues. 2 stretches are compositionally biased toward low complexity: residues 63 to 76 (QENNTNKEQTNNQN) and 91 to 110 (NSNGNSSDNQNKQQQSVQDN).

It localises to the cell membrane. This is an uncharacterized protein from Staphylococcus epidermidis (strain ATCC 35984 / DSM 28319 / BCRC 17069 / CCUG 31568 / BM 3577 / RP62A).